The primary structure comprises 611 residues: Threonine--tRNA ligase (611 aa).

An editing domain region spans residues 1–145; it reads MRLLLIHSDH…TILPGEGAAA (145 aa). The catalytic stretch occupies residues 195–487; sequence VHVDLMRAKE…TAAQEVPSFP (293 aa). The Zn(2+) site is built by Cys287, His339, and His460.

The protein belongs to the class-II aminoacyl-tRNA synthetase family. Homodimer. Zn(2+) is required as a cofactor.

Its subcellular location is the cytoplasm. It carries out the reaction tRNA(Thr) + L-threonine + ATP = L-threonyl-tRNA(Thr) + AMP + diphosphate + H(+). In terms of biological role, catalyzes the attachment of threonine to tRNA(Thr) in a two-step reaction: L-threonine is first activated by ATP to form Thr-AMP and then transferred to the acceptor end of tRNA(Thr). Also edits incorrectly charged L-seryl-tRNA(Thr). The polypeptide is Threonine--tRNA ligase (Methanoculleus marisnigri (strain ATCC 35101 / DSM 1498 / JR1)).